The primary structure comprises 382 residues: Homeobox protein bagpipe (382 aa).

Disordered regions lie at residues 27–66 (NDILTRSNPETRRMSSVDSEPEPEKLKPSSDRERSISKSP), 144–178 (TSNDSDCDSPPPLSSSPSESPLSHDGSGLSRKKRS), and 314–382 (QPIP…VEID). A compositionally biased stretch (basic and acidic residues) spans 48–62 (EPEKLKPSSDRERSI). A compositionally biased stretch (low complexity) spans 158–170 (SSPSESPLSHDGS). Positions 175–234 (KKRSRAAFSHAQVFELERRFAQQRYLSGPERSEMAKSLRLTETQVKIWFQNRRYKTKRKQ) form a DNA-binding region, homeobox. Residues 321–335 (QSSSFVTASSASSSP) are compositionally biased toward low complexity. Residues 373 to 382 (EDVDENVEID) show a composition bias toward acidic residues.

The protein belongs to the NK-3 homeobox family. In terms of tissue distribution, is expressed in a segmented pattern in visceral muscle and in a subset of cardiac muscles. Loss of activity results in segmental gaps in midgut visceral muscle.

It is found in the nucleus. Involved in the determination of cell fates in the dorsal mesoderm. In Drosophila melanogaster (Fruit fly), this protein is Homeobox protein bagpipe (bap).